Consider the following 300-residue polypeptide: CDAN1-interacting nuclease 1 (300 aa).

The protein resides in the nucleus. The protein localises to the cytoplasm. Functionally, may play a role in erythroid cell differentiation. The protein is CDAN1-interacting nuclease 1 (cdin1) of Danio rerio (Zebrafish).